Here is a 193-residue protein sequence, read N- to C-terminus: Pyridoxal 5'-phosphate synthase subunit PdxT (193 aa).

52–54 (GES) contributes to the L-glutamine binding site. The active-site Nucleophile is the Cys-84. L-glutamine contacts are provided by residues Arg-111 and 139 to 140 (IR). Residues His-176 and Glu-178 each act as charge relay system in the active site.

The protein belongs to the glutaminase PdxT/SNO family. In terms of assembly, in the presence of PdxS, forms a dodecamer of heterodimers. Only shows activity in the heterodimer.

The catalysed reaction is aldehydo-D-ribose 5-phosphate + D-glyceraldehyde 3-phosphate + L-glutamine = pyridoxal 5'-phosphate + L-glutamate + phosphate + 3 H2O + H(+). It carries out the reaction L-glutamine + H2O = L-glutamate + NH4(+). It functions in the pathway cofactor biosynthesis; pyridoxal 5'-phosphate biosynthesis. In terms of biological role, catalyzes the hydrolysis of glutamine to glutamate and ammonia as part of the biosynthesis of pyridoxal 5'-phosphate. The resulting ammonia molecule is channeled to the active site of PdxS. The chain is Pyridoxal 5'-phosphate synthase subunit PdxT from Pasteurella multocida (strain Pm70).